A 246-amino-acid chain; its full sequence is 2-C-methyl-D-erythritol 4-phosphate cytidylyltransferase (246 aa).

Belongs to the IspD/TarI cytidylyltransferase family. IspD subfamily.

It catalyses the reaction 2-C-methyl-D-erythritol 4-phosphate + CTP + H(+) = 4-CDP-2-C-methyl-D-erythritol + diphosphate. The protein operates within isoprenoid biosynthesis; isopentenyl diphosphate biosynthesis via DXP pathway; isopentenyl diphosphate from 1-deoxy-D-xylulose 5-phosphate: step 2/6. In terms of biological role, catalyzes the formation of 4-diphosphocytidyl-2-C-methyl-D-erythritol from CTP and 2-C-methyl-D-erythritol 4-phosphate (MEP). The sequence is that of 2-C-methyl-D-erythritol 4-phosphate cytidylyltransferase from Chlorobaculum tepidum (strain ATCC 49652 / DSM 12025 / NBRC 103806 / TLS) (Chlorobium tepidum).